A 251-amino-acid chain; its full sequence is Uridylate kinase (251 aa).

Residue 26–29 (KLGG) coordinates ATP. Gly67 is a UMP binding site. Positions 68 and 72 each coordinate ATP. Residues Asp87 and 148–155 (MGLPYFST) each bind UMP. Phe181 and Asp184 together coordinate ATP.

The protein belongs to the UMP kinase family. As to quaternary structure, homohexamer.

It localises to the cytoplasm. The catalysed reaction is UMP + ATP = UDP + ADP. The protein operates within pyrimidine metabolism; CTP biosynthesis via de novo pathway; UDP from UMP (UMPK route): step 1/1. With respect to regulation, inhibited by UTP. In terms of biological role, catalyzes the reversible phosphorylation of UMP to UDP. The chain is Uridylate kinase from Mycolicibacterium vanbaalenii (strain DSM 7251 / JCM 13017 / BCRC 16820 / KCTC 9966 / NRRL B-24157 / PYR-1) (Mycobacterium vanbaalenii).